A 430-amino-acid chain; its full sequence is Replication protein A 32 kDa subunit C (430 aa).

Residues 14–46 (MPSQRSGAPAPEYSAAGTGAAAAPSPSKPRDPR) are disordered. Residues 23-38 (APEYSAAGTGAAAAPS) show a composition bias toward low complexity. A DNA-binding region (OB) is located at residues 86–160 (VRVLGRVVSV…QGLARSIRPI (75 aa)).

Belongs to the replication factor A protein 2 family. In terms of assembly, heterotrimer of RPA1, RPA2 and RPA3 (canonical replication protein A complex). Interacts with RPA1C and RPA3. In terms of processing, phosphorylated in a cell-cycle-dependent manner (from the S phase until mitosis). In response to DNA damage, recruited to DNA-repair nuclear foci, as a hypophosphorylated form.

Its subcellular location is the nucleus. Functionally, component of the replication protein A complex (RPA) required for DNA recombination, repair and replication. The activity of RPA is mediated by single-stranded DNA binding and protein interactions. This chain is Replication protein A 32 kDa subunit C (RPA2C), found in Oryza sativa subsp. japonica (Rice).